The primary structure comprises 261 residues: DNA-directed RNA polymerase subunit Rpo3 (261 aa).

This sequence belongs to the archaeal Rpo3/eukaryotic RPB3 RNA polymerase subunit family. Part of the RNA polymerase complex.

The protein resides in the cytoplasm. It carries out the reaction RNA(n) + a ribonucleoside 5'-triphosphate = RNA(n+1) + diphosphate. Its function is as follows. DNA-dependent RNA polymerase (RNAP) catalyzes the transcription of DNA into RNA using the four ribonucleoside triphosphates as substrates. The polypeptide is DNA-directed RNA polymerase subunit Rpo3 (Pyrococcus furiosus (strain ATCC 43587 / DSM 3638 / JCM 8422 / Vc1)).